Reading from the N-terminus, the 109-residue chain is Parvalbumin beta (109 aa).

N-acetylalanine is present on Ala2. Residues 22-41 form an igE-binding region; sequence AGSFDHKKFFKACGLSGKST. 2 consecutive EF-hand domains span residues 39–74 and 78–109; these read KSTD…FKAG and LSDA…MIKG. Ca(2+) contacts are provided by Asp52, Asp54, Ser56, Phe58, Glu60, Glu63, Asp91, Asp93, Asp95, Lys97, and Glu102.

This sequence belongs to the parvalbumin family. The N-terminus is blocked. In terms of tissue distribution, expressed in both white and dark muscles (at protein level). About eight and a half times lower expression in the dark muscle than in the white muscle (at protein level).

In muscle, parvalbumin is thought to be involved in relaxation after contraction. It binds two calcium ions. The polypeptide is Parvalbumin beta (Scomber japonicus (Chub mackerel)).